We begin with the raw amino-acid sequence, 73 residues long: ATP synthase subunit c (73 aa).

Helical transmembrane passes span L4–I24 and G51–F71.

The protein belongs to the ATPase C chain family. As to quaternary structure, F-type ATPases have 2 components, F(1) - the catalytic core - and F(0) - the membrane proton channel. F(1) has five subunits: alpha(3), beta(3), gamma(1), delta(1), epsilon(1). F(0) has three main subunits: a(1), b(2) and c(10-14). The alpha and beta chains form an alternating ring which encloses part of the gamma chain. F(1) is attached to F(0) by a central stalk formed by the gamma and epsilon chains, while a peripheral stalk is formed by the delta and b chains.

The protein localises to the cell membrane. F(1)F(0) ATP synthase produces ATP from ADP in the presence of a proton or sodium gradient. F-type ATPases consist of two structural domains, F(1) containing the extramembraneous catalytic core and F(0) containing the membrane proton channel, linked together by a central stalk and a peripheral stalk. During catalysis, ATP synthesis in the catalytic domain of F(1) is coupled via a rotary mechanism of the central stalk subunits to proton translocation. Functionally, key component of the F(0) channel; it plays a direct role in translocation across the membrane. A homomeric c-ring of between 10-14 subunits forms the central stalk rotor element with the F(1) delta and epsilon subunits. The sequence is that of ATP synthase subunit c from Caldanaerobacter subterraneus subsp. tengcongensis (strain DSM 15242 / JCM 11007 / NBRC 100824 / MB4) (Thermoanaerobacter tengcongensis).